The primary structure comprises 344 residues: Small neutral protease regulatory protein (344 aa).

Positions 1-60 (MELEVRHLRALCAIADAGSLHRAARRLGVAQPTLSTQLTRIEQALGGPLFTRERTGCRPT) constitute an HTH lysR-type domain. A DNA-binding region (H-T-H motif) is located at residues 20–39 (LHRAARRLGVAQPTLSTQLT). A disordered region spans residues 322-344 (SCGRAEGSRSRRPRDVAPPRPIG). Basic and acidic residues predominate over residues 327 to 338 (EGSRSRRPRDVA).

This sequence belongs to the LysR transcriptional regulatory family.

In terms of biological role, transcriptional activator of the gene (snpA) for the small neutral protease. This is Small neutral protease regulatory protein (mprR) from Streptomyces lividans.